Reading from the N-terminus, the 466-residue chain is Asparagine--tRNA ligase (466 aa).

Belongs to the class-II aminoacyl-tRNA synthetase family. In terms of assembly, homodimer.

Its subcellular location is the cytoplasm. It catalyses the reaction tRNA(Asn) + L-asparagine + ATP = L-asparaginyl-tRNA(Asn) + AMP + diphosphate + H(+). The polypeptide is Asparagine--tRNA ligase (Shewanella denitrificans (strain OS217 / ATCC BAA-1090 / DSM 15013)).